Consider the following 87-residue polypeptide: Kappa 1a-bungarotoxin (87 aa).

The N-terminal stretch at 1-21 is a signal peptide; it reads MKTLLLTLVVVTIVCLDLGYT. Cystine bridges form between cysteine 24-cysteine 42, cysteine 35-cysteine 63, cysteine 48-cysteine 52, cysteine 67-cysteine 79, and cysteine 80-cysteine 85.

Belongs to the three-finger toxin family. Long-chain subfamily. Kappa-neurotoxin sub-subfamily. As to quaternary structure, homo- and heterodimer; non-covalently linked. As to expression, expressed by the venom gland.

The protein resides in the secreted. In terms of biological role, postsynaptic neurotoxin that binds and inhibits neuronal nicotinic acetylcholine receptors (nAChR) with high affinity (IC(50)&lt;100 nM). Is a selective, and slowly reversible antagonist of alpha-3/CHRNA3-containing and some alpha-4/CHRNA4-containing AChRs. This chain is Kappa 1a-bungarotoxin, found in Bungarus candidus (Malayan krait).